Here is a 136-residue protein sequence, read N- to C-terminus: Large ribosomal subunit protein bL21 (136 aa).

The tract at residues 107–136 is disordered; the sequence is RAAADRKTAPKRASAKAAADQTTAAQATAE. Residues 121-136 show a composition bias toward low complexity; that stretch reads AKAAADQTTAAQATAE.

The protein belongs to the bacterial ribosomal protein bL21 family. In terms of assembly, part of the 50S ribosomal subunit. Contacts protein L20.

Its function is as follows. This protein binds to 23S rRNA in the presence of protein L20. In Acidothermus cellulolyticus (strain ATCC 43068 / DSM 8971 / 11B), this protein is Large ribosomal subunit protein bL21.